The primary structure comprises 223 residues: Translation initiation factor 6 (223 aa).

Belongs to the eIF-6 family.

Binds to the 50S ribosomal subunit and prevents its association with the 30S ribosomal subunit to form the 70S initiation complex. This is Translation initiation factor 6 from Sulfolobus acidocaldarius (strain ATCC 33909 / DSM 639 / JCM 8929 / NBRC 15157 / NCIMB 11770).